Reading from the N-terminus, the 491-residue chain is Probable glycine dehydrogenase (decarboxylating) subunit 2 (491 aa).

Lys-264 is modified (N6-(pyridoxal phosphate)lysine).

This sequence belongs to the GcvP family. C-terminal subunit subfamily. The glycine cleavage system is composed of four proteins: P, T, L and H. In this organism, the P 'protein' is a heterodimer of two subunits. Requires pyridoxal 5'-phosphate as cofactor.

It carries out the reaction N(6)-[(R)-lipoyl]-L-lysyl-[glycine-cleavage complex H protein] + glycine + H(+) = N(6)-[(R)-S(8)-aminomethyldihydrolipoyl]-L-lysyl-[glycine-cleavage complex H protein] + CO2. Its function is as follows. The glycine cleavage system catalyzes the degradation of glycine. The P protein binds the alpha-amino group of glycine through its pyridoxal phosphate cofactor; CO(2) is released and the remaining methylamine moiety is then transferred to the lipoamide cofactor of the H protein. The protein is Probable glycine dehydrogenase (decarboxylating) subunit 2 of Coxiella burnetii (strain CbuG_Q212) (Coxiella burnetii (strain Q212)).